A 1276-amino-acid chain; its full sequence is Sterol regulatory element-binding protein cleavage-activating protein (1276 aa).

The Cytoplasmic segment spans residues 1 to 18 (MTLTERLREKISQAFYNH). A helical membrane pass occupies residues 19–39 (GLLCASYPIPIILFTGLCILA). Residues 40 to 279 (CCYPLLKLPL…NLVHVHFKEE (240 aa)) lie on the Lumenal side of the membrane. Residues 46–284 (KLPLPGTGPV…HFKEEIGIAE (239 aa)) are loop-1. Positions 60–81 (PVKGYSPPPADSDHKQGEPSEQ) are disordered. Asparagine 263 carries an N-linked (GlcNAc...) asparagine glycan. Residues 280–300 (IGIAELIPLVTTYIILFAYIY) form a helical membrane-spanning segment. Positions 284-442 (ELIPLVTTYI…MLFFTTVLSI (159 aa)) constitute an SSD domain. Over 301–312 (FSTRKIDMVKSK) the chain is Cytoplasmic. Residues 313 to 333 (WGLALAAVVTVLSSLLMSVGL) form a helical membrane-spanning segment. The Lumenal portion of the chain corresponds to 334-344 (CTLFGLTPTLN). The chain crosses the membrane as a helical span at residues 345–365 (GGEIFPYLVVVIGLENVLVLT). The Cytoplasmic segment spans residues 366–401 (KSVVSTPVDLEVKLRIAQGLSSESWSIMKNVATELG). A helical membrane pass occupies residues 402 to 422 (IILIGYFTLVPAIQEFCLFAV). Position 423 (valine 423) is a topological domain, lumenal. Residues 424–444 (GLVSDFFLQMLFFTTVLSIDI) traverse the membrane as a helical segment. Over 445–518 (RRMELADLNK…FLARTRLAQR (74 aa)) the chain is Cytoplasmic. The short motif at 447–452 (MELADL) is the ER export signal element. Residues lysine 454 and lysine 466 each participate in a glycyl lysine isopeptide (Lys-Gly) (interchain with G-Cter in ubiquitin) cross-link. A helical transmembrane segment spans residues 519–539 (LIMAGTVVWIGILVYTDPAGL). The loop-7 stretch occupies residues 535–710 (DPAGLRTYLA…QTHGDITLYK (176 aa)). Topologically, residues 540 to 707 (RTYLAAQVTE…GGTQTHGDIT (168 aa)) are lumenal. Residues asparagine 590 and asparagine 641 are each glycosylated (N-linked (GlcNAc...) asparagine). Residues 708 to 728 (LYKVAALGLAAGIVLVLLLLC) form a helical membrane-spanning segment. Residues 729–1276 (LYRVLCPRNY…YVPSVLEKLD (548 aa)) are Cytoplasmic-facing. The segment at 731–1276 (RVLCPRNYGQ…YVPSVLEKLD (546 aa)) is interaction with SREBF2. The stretch at 771-811 (VLRGHLMDIECLASDGMLLVSCCLAGQVCVWDAQTGDCLTR) is one WD 1 repeat. Serine 821, serine 837, serine 843, serine 850, serine 905, and serine 934 each carry phosphoserine. The tract at residues 834–903 (ERLSDGGKAS…RHRAGCGRSR (70 aa)) is disordered. Residues 928–958 (SALRPPSPGPPLPQASQEEGTAPEKGSPPLA) form a disordered region. WD repeat units follow at residues 949–999 (APEK…LCCS) and 1002–1039 (EISSGITALVFLDRRIVAARLNGSLDFFSLETHTSLSP). Arginine 1048 is modified (omega-N-methylarginine). WD repeat units follow at residues 1074-1111 (AHQKPITALRAAAGRLVTGSQDHTLRVFRLEDSCCLFT), 1114-1152 (GHSGAITTVYIDQTMVLASGGQDGAICLWDVLTGSRVSH), 1155-1192 (AHRGDVTSLTCTTSCVISSGLDDFINIWDRSTGIKLYS), and 1194-1232 (QQDLGCGASLGVISDNLLVTGGQGCVSFWDLNYGDLLQT).

The protein belongs to the WD repeat SCAP family. As to quaternary structure, membrane region forms a homotetramer. Component of the SCAP-SREBP complex (composed of SCAP and SREBF1/SREBP1 or SREBF2/SREBP2); interacts with SREBF1/SREBP1 or SREBF2/SREBP2 through its C-terminal cytoplasmic domain. Forms a ternary complex with INSIG1 or INSIG2 through its transmembrane domains at high sterol concentrations. Interacts with PAQR3; the interaction anchors the SCAP-SREBP complex to the Golgi apparatus in low cholesterol conditions. Interacts with the SEC23-SEC24 complex in a SAR1-GTP-dependent manner through an ER export signal in its third cytoplasmic loop. Interacts with RNF139; the interaction inhibits the interaction of SCAP with SEC24B and hampering the ER to Golgi transport of the SCAP-SREBP complex. Interacts with SPRING1. In terms of processing, ubiquitinated at Lys-454 and Lys-466. RNF145 triggers ubiquitination of SCAP, likely inhibiting SCAP-SREBP complex transport to the Golgi apparatus and the subsequent processing/maturation of SREBF2/SREBP2.

It is found in the endoplasmic reticulum membrane. The protein localises to the golgi apparatus membrane. The protein resides in the cytoplasmic vesicle. It localises to the COPII-coated vesicle membrane. In terms of biological role, escort protein required for cholesterol as well as lipid homeostasis. Regulates export of the SCAP-SREBP complex from the endoplasmic reticulum to the Golgi upon low cholesterol, thereby regulating the processing of sterol regulatory element-binding proteins (SREBPs) SREBF1/SREBP1 and SREBF2/SREBP2. At high sterol concentrations, formation of a ternary complex with INSIG (INSIG1 or INSIG2) leads to mask the ER export signal in SCAP, promoting retention of the complex in the endoplasmic reticulum. Low sterol concentrations trigger release of INSIG, a conformational change in the SSD domain of SCAP, unmasking of the ER export signal, promoting recruitment into COPII-coated vesicles and transport of the SCAP-SREBP to the Golgi: in the Golgi, SREBPs are then processed, releasing the transcription factor fragment of SREBPs from the membrane, its import into the nucleus and up-regulation of LDLR, INSIG1 and the mevalonate pathway. Binds cholesterol via its SSD domain. This is Sterol regulatory element-binding protein cleavage-activating protein from Rattus norvegicus (Rat).